Consider the following 666-residue polypeptide: Polyamine deacetylase HDAC10 (666 aa).

Positions 1 to 323 (MGTALVYHED…VCMMVQTLLG (323 aa)) are histone deacetylase. His135 is a catalytic residue.

It belongs to the histone deacetylase family. HD type 2 subfamily. As to quaternary structure, interacts with HDAC3. Interacts with HDAC2 and NCOR2/SMRT. Interacts with HSPA8/HSC70. Interacts with MSH2. Widely expressed.

Its subcellular location is the cytoplasm. The protein resides in the nucleus. The catalysed reaction is N(8)-acetylspermidine + H2O = spermidine + acetate. The enzyme catalyses N-acetylputrescine + H2O = putrescine + acetate. It carries out the reaction N-acetylcadaverine + H2O = cadaverine + acetate. It catalyses the reaction N(6)-acetyl-L-lysyl-[protein] + H2O = L-lysyl-[protein] + acetate. Polyamine deacetylase (PDAC), which acts preferentially on N(8)-acetylspermidine, and also on acetylcadaverine and acetylputrescine. Exhibits attenuated catalytic activity toward N(1),N(8)-diacetylspermidine and very low activity, if any, toward N(1)-acetylspermidine. Histone deacetylase activity has been observed in vitro. Has also been shown to be involved in MSH2 deacetylation. The physiological relevance of protein/histone deacetylase activity is unclear and could be very weak. May play a role in the promotion of late stages of autophagy, possibly autophagosome-lysosome fusion and/or lysosomal exocytosis in neuroblastoma cells. May play a role in homologous recombination. May promote DNA mismatch repair. The protein is Polyamine deacetylase HDAC10 (Hdac10) of Mus musculus (Mouse).